A 285-amino-acid chain; its full sequence is HTH-type transcriptional regulator MurR (285 aa).

In terms of domain architecture, HTH rpiR-type spans 1 to 77; it reads MLYLTKIRNA…MALIGEYSAS (77 aa). Residues 37–56 constitute a DNA-binding region (H-T-H motif); that stretch reads SRKMAKQLGISQSSIVKFAQ. One can recognise an SIS domain in the interval 128–268; that stretch reads IIEVISKAPF…FVGLVQLNDV (141 aa).

In terms of assembly, homotetramer.

It participates in amino-sugar metabolism; N-acetylmuramate degradation [regulation]. In terms of biological role, represses the expression of the murPQ operon involved in the uptake and degradation of N-acetylmuramic acid (MurNAc). Binds to two adjacent inverted repeats within the operator region. MurNAc 6-phosphate, the substrate of MurQ, is the specific inducer that weakens binding of MurR to the operator. The polypeptide is HTH-type transcriptional regulator MurR (Escherichia coli O157:H7).